Here is a 183-residue protein sequence, read N- to C-terminus: Ribosome maturation factor RimM (183 aa).

Residues 102–183 (DDDFYWHQLE…CITVDWDPEF (82 aa)) form the PRC barrel domain.

Belongs to the RimM family. As to quaternary structure, binds ribosomal protein uS19.

The protein resides in the cytoplasm. An accessory protein needed during the final step in the assembly of 30S ribosomal subunit, possibly for assembly of the head region. Essential for efficient processing of 16S rRNA. May be needed both before and after RbfA during the maturation of 16S rRNA. It has affinity for free ribosomal 30S subunits but not for 70S ribosomes. In Saccharophagus degradans (strain 2-40 / ATCC 43961 / DSM 17024), this protein is Ribosome maturation factor RimM.